The following is a 126-amino-acid chain: Aspartate 1-decarboxylase (126 aa).

The Schiff-base intermediate with substrate; via pyruvic acid role is filled by serine 25. Serine 25 carries the pyruvic acid (Ser) modification. Residue threonine 57 coordinates substrate. The Proton donor role is filled by tyrosine 58. Residue 73–75 (GAA) coordinates substrate.

This sequence belongs to the PanD family. In terms of assembly, heterooctamer of four alpha and four beta subunits. Pyruvate is required as a cofactor. Post-translationally, is synthesized initially as an inactive proenzyme, which is activated by self-cleavage at a specific serine bond to produce a beta-subunit with a hydroxyl group at its C-terminus and an alpha-subunit with a pyruvoyl group at its N-terminus.

The protein resides in the cytoplasm. The catalysed reaction is L-aspartate + H(+) = beta-alanine + CO2. The protein operates within cofactor biosynthesis; (R)-pantothenate biosynthesis; beta-alanine from L-aspartate: step 1/1. In terms of biological role, catalyzes the pyruvoyl-dependent decarboxylation of aspartate to produce beta-alanine. In Methylococcus capsulatus (strain ATCC 33009 / NCIMB 11132 / Bath), this protein is Aspartate 1-decarboxylase.